A 507-amino-acid chain; its full sequence is Sugar transport protein 6 (507 aa).

At methionine 1–tyrosine 20 the chain is on the cytoplasmic side. Helical transmembrane passes span valine 21 to isoleucine 41, phenylalanine 78 to serine 98, isoleucine 115 to isoleucine 135, leucine 138 to isoleucine 158, glycine 165 to valine 185, isoleucine 199 to isoleucine 219, phenylalanine 280 to phenylalanine 300, leucine 318 to valine 338, phenylalanine 345 to leucine 365, leucine 381 to leucine 401, glycine 418 to leucine 438, and glycine 447 to isoleucine 467. The Cytoplasmic segment spans residues proline 468–alanine 507.

The protein belongs to the major facilitator superfamily. Sugar transporter (TC 2.A.1.1) family. As to expression, pollen specific.

It localises to the membrane. With respect to regulation, inhibited by uncouplers such as 2,4-dinitrophenol and carbonyl cyanide-m-chlorophenyl-hydrazone. In terms of biological role, mediates an active uptake of hexoses, probably by sugar/hydrogen symport. Can transport glucose, 3-O-methylglucose, mannose, fructose and galactose, and, to a lower extent, xylose and ribulose. The polypeptide is Sugar transport protein 6 (STP6) (Arabidopsis thaliana (Mouse-ear cress)).